The chain runs to 376 residues: Queuine tRNA-ribosyltransferase (376 aa).

The Proton acceptor role is filled by aspartate 90. Substrate is bound by residues 90-94 (DSGGF), aspartate 144, glutamine 193, and glycine 220. The tract at residues 251–257 (GVGTPED) is RNA binding. Residue aspartate 270 is the Nucleophile of the active site. Residues 275-279 (TRNAR) are RNA binding; important for wobble base 34 recognition. 4 residues coordinate Zn(2+): cysteine 308, cysteine 310, cysteine 313, and histidine 339.

Belongs to the queuine tRNA-ribosyltransferase family. Homodimer. Within each dimer, one monomer is responsible for RNA recognition and catalysis, while the other monomer binds to the replacement base PreQ1. Zn(2+) serves as cofactor.

It carries out the reaction 7-aminomethyl-7-carbaguanine + guanosine(34) in tRNA = 7-aminomethyl-7-carbaguanosine(34) in tRNA + guanine. It participates in tRNA modification; tRNA-queuosine biosynthesis. In terms of biological role, catalyzes the base-exchange of a guanine (G) residue with the queuine precursor 7-aminomethyl-7-deazaguanine (PreQ1) at position 34 (anticodon wobble position) in tRNAs with GU(N) anticodons (tRNA-Asp, -Asn, -His and -Tyr). Catalysis occurs through a double-displacement mechanism. The nucleophile active site attacks the C1' of nucleotide 34 to detach the guanine base from the RNA, forming a covalent enzyme-RNA intermediate. The proton acceptor active site deprotonates the incoming PreQ1, allowing a nucleophilic attack on the C1' of the ribose to form the product. After dissociation, two additional enzymatic reactions on the tRNA convert PreQ1 to queuine (Q), resulting in the hypermodified nucleoside queuosine (7-(((4,5-cis-dihydroxy-2-cyclopenten-1-yl)amino)methyl)-7-deazaguanosine). In Cupriavidus necator (strain ATCC 17699 / DSM 428 / KCTC 22496 / NCIMB 10442 / H16 / Stanier 337) (Ralstonia eutropha), this protein is Queuine tRNA-ribosyltransferase.